The primary structure comprises 25 residues: Caerin-1.10 (25 aa).

Leucine 25 carries the post-translational modification Leucine amide.

This sequence belongs to the frog skin active peptide (FSAP) family. Caerin subfamily. Expressed by the skin dorsal glands.

It is found in the secreted. Antibacterial peptide with wide spectrum of activity. In Litoria rothii (Roth's tree frog), this protein is Caerin-1.10.